A 238-amino-acid chain; its full sequence is DNA repair protein RecO (238 aa).

The protein belongs to the RecO family.

In terms of biological role, involved in DNA repair and RecF pathway recombination. The chain is DNA repair protein RecO from Cereibacter sphaeroides (strain ATCC 17023 / DSM 158 / JCM 6121 / CCUG 31486 / LMG 2827 / NBRC 12203 / NCIMB 8253 / ATH 2.4.1.) (Rhodobacter sphaeroides).